Consider the following 201-residue polypeptide: UPF0301 protein Atu0781 (201 aa).

It belongs to the UPF0301 (AlgH) family.

The sequence is that of UPF0301 protein Atu0781 from Agrobacterium fabrum (strain C58 / ATCC 33970) (Agrobacterium tumefaciens (strain C58)).